The primary structure comprises 167 residues: Ribonuclease P protein subunit p20 (167 aa).

Residues 1–36 form a disordered region; it reads MMGSNYPEHGTKPRSAKYHKQQNHRVVRKQPPRPAV. Basic residues predominate over residues 12–31; it reads KPRSAKYHKQQNHRVVRKQP.

As to quaternary structure, interacts with Smn.

Its subcellular location is the nucleus. It localises to the nucleolus. The protein resides in the cytoplasm. It is found in the cytoplasmic granule. Functionally, component of ribonuclease P, a protein complex that generates mature tRNA molecules by cleaving their 5'-ends. Also a component of RNase MRP complex, which cleaves pre-rRNA sequences. This chain is Ribonuclease P protein subunit p20, found in Drosophila melanogaster (Fruit fly).